Here is a 485-residue protein sequence, read N- to C-terminus: NADH-quinone oxidoreductase subunit N (485 aa).

14 consecutive transmembrane segments (helical) span residues 8 to 28, 35 to 55, 71 to 91, 105 to 125, 127 to 147, 159 to 179, 203 to 223, 235 to 255, 271 to 291, 297 to 317, 326 to 346, 373 to 393, 408 to 430, and 455 to 475; these read LIAL…MLSI, FLNA…LWFV, GFAM…CTFA, FYLL…ANHL, ALFL…GYAF, YTIL…LVYA, LLAG…LVPF, PAPV…GVVM, IVLG…ALSQ, LLGY…IALQ, VGVY…VVSL, AAVM…LGFI, WWLV…RVAV, and IVVL…QPLI.

Belongs to the complex I subunit 2 family. NDH-1 is composed of 13 different subunits. Subunits NuoA, H, J, K, L, M, N constitute the membrane sector of the complex.

The protein localises to the cell inner membrane. The enzyme catalyses a quinone + NADH + 5 H(+)(in) = a quinol + NAD(+) + 4 H(+)(out). NDH-1 shuttles electrons from NADH, via FMN and iron-sulfur (Fe-S) centers, to quinones in the respiratory chain. The immediate electron acceptor for the enzyme in this species is believed to be ubiquinone. Couples the redox reaction to proton translocation (for every two electrons transferred, four hydrogen ions are translocated across the cytoplasmic membrane), and thus conserves the redox energy in a proton gradient. The chain is NADH-quinone oxidoreductase subunit N from Citrobacter koseri (strain ATCC BAA-895 / CDC 4225-83 / SGSC4696).